A 391-amino-acid chain; its full sequence is Mannonate dehydratase (391 aa).

Belongs to the mannonate dehydratase family. Fe(2+) serves as cofactor. The cofactor is Mn(2+).

The enzyme catalyses D-mannonate = 2-dehydro-3-deoxy-D-gluconate + H2O. Its pathway is carbohydrate metabolism; pentose and glucuronate interconversion. In terms of biological role, catalyzes the dehydration of D-mannonate. This chain is Mannonate dehydratase, found in Marinomonas sp. (strain MWYL1).